Consider the following 126-residue polypeptide: Fluoride-specific ion channel FluC (126 aa).

4 consecutive transmembrane segments (helical) span residues 6–26, 36–56, 69–89, and 99–119; these read FVAV…FSVL, YGTL…VGFF, LAIT…SEVV, and WAAM…ALGL. Na(+) is bound by residues G76 and T79.

The protein belongs to the fluoride channel Fluc/FEX (TC 1.A.43) family.

The protein localises to the cell inner membrane. The enzyme catalyses fluoride(in) = fluoride(out). With respect to regulation, na(+) is not transported, but it plays an essential structural role and its presence is essential for fluoride channel function. Functionally, fluoride-specific ion channel. Important for reducing fluoride concentration in the cell, thus reducing its toxicity. This Cupriavidus taiwanensis (strain DSM 17343 / BCRC 17206 / CCUG 44338 / CIP 107171 / LMG 19424 / R1) (Ralstonia taiwanensis (strain LMG 19424)) protein is Fluoride-specific ion channel FluC.